Here is a 43-residue protein sequence, read N- to C-terminus: uncharacterized protein (43 aa).

Residues 1–37 (MIIKNNNNNNNNNNNNNNNNNNNNNNNNNNNNNNNNN) show a composition bias toward low complexity. The disordered stretch occupies residues 1–43 (MIIKNNNNNNNNNNNNNNNNNNNNNNNNNNNNNNNNNIEIIIK).

This is an uncharacterized protein from Dictyostelium discoideum (Social amoeba).